Here is a 61-residue protein sequence, read N- to C-terminus: Protein translocase subunit SecE (61 aa).

The chain crosses the membrane as a helical span at residues 38 to 58; that stretch reads GIGMILIGLIGLVIRMIGYLI.

This sequence belongs to the SecE/SEC61-gamma family. In terms of assembly, component of the Sec protein translocase complex. Heterotrimer consisting of SecY (alpha), SecG (beta) and SecE (gamma) subunits. The heterotrimers can form oligomers, although 1 heterotrimer is thought to be able to translocate proteins. Interacts with the ribosome. May interact with SecDF, and other proteins may be involved.

The protein resides in the cell membrane. Its function is as follows. Essential subunit of the Sec protein translocation channel SecYEG. Clamps together the 2 halves of SecY. May contact the channel plug during translocation. This Thermococcus onnurineus (strain NA1) protein is Protein translocase subunit SecE.